The sequence spans 374 residues: Translocating chain-associated membrane protein 1 (374 aa).

At M1–C29 the chain is on the cytoplasmic side. Residues L30 to F50 form a helical membrane-spanning segment. The Lumenal segment spans residues V51–G76. An N-linked (GlcNAc...) asparagine glycan is attached at N56. Residues I77–I97 form a helical membrane-spanning segment. The Cytoplasmic portion of the chain corresponds to Q98 to E121. In terms of domain architecture, TLC spans S117–H326. A helical membrane pass occupies residues S122 to S142. Topologically, residues E143–N159 are lumenal. A helical transmembrane segment spans residues L160–F180. The Cytoplasmic segment spans residues P181–D192. The helical transmembrane segment at I193–L213 threads the bilayer. Residues N214–H217 lie on the Lumenal side of the membrane. Residues L218–L238 form a helical membrane-spanning segment. Over F239 to S251 the chain is Cytoplasmic. Residues L252–V272 form a helical membrane-spanning segment. The Lumenal segment spans residues G273–R297. The chain crosses the membrane as a helical span at residues I298–F318. Residues Q319 to S374 are Cytoplasmic-facing. Positions P333–S374 are disordered. Positions V334–R347 are enriched in basic residues. Residues N352 to A363 are compositionally biased toward polar residues. Phosphoserine is present on S365.

The protein belongs to the TRAM family. In terms of assembly, interacts with SEC61B. May interact with Derlin-1/DERL1. In terms of processing, N-glycosylated.

Its subcellular location is the endoplasmic reticulum membrane. In terms of biological role, involved in the translocation of nascent protein chains into or through the endoplasmic reticulum (ER) membrane by facilitating the proper chain positioning at the SEC61 channel. Regulates the exposure of nascent secretory protein chain to the cytosol during translocation into the ER. May affect the phospholipid bilayer in the vicinity of the lateral gate of the SEC61 channel, thereby facilitating ER protein transport. Intimately associates with transmembrane (TM) domain of nascent membrane proteins during the entire integration process into the ER membrane. Associates with the second TM domain of G-protein-coupled receptor opsin/OPSD nascent chain in the ER membrane, which may facilitate its integration into the membrane. Under conditions of ER stress, participates in the disposal of misfolded ER membrane proteins during the unfolded protein response (UPR), an integrated stress response (ISR) pathway, by selectively retrotranslocating misfolded ER-membrane proteins from the ER into the cytosol where they are ubiquitinated and degraded by the proteasome. In Mus musculus (Mouse), this protein is Translocating chain-associated membrane protein 1.